The sequence spans 141 residues: Aspartate 1-decarboxylase (141 aa).

Catalysis depends on serine 25, which acts as the Schiff-base intermediate with substrate; via pyruvic acid. Serine 25 bears the Pyruvic acid (Ser) mark. Threonine 57 contacts substrate. Tyrosine 58 serves as the catalytic Proton donor. 73 to 75 (GAA) is a binding site for substrate.

Belongs to the PanD family. Heterooctamer of four alpha and four beta subunits. Pyruvate is required as a cofactor. In terms of processing, is synthesized initially as an inactive proenzyme, which is activated by self-cleavage at a specific serine bond to produce a beta-subunit with a hydroxyl group at its C-terminus and an alpha-subunit with a pyruvoyl group at its N-terminus.

The protein localises to the cytoplasm. It catalyses the reaction L-aspartate + H(+) = beta-alanine + CO2. It functions in the pathway cofactor biosynthesis; (R)-pantothenate biosynthesis; beta-alanine from L-aspartate: step 1/1. Its function is as follows. Catalyzes the pyruvoyl-dependent decarboxylation of aspartate to produce beta-alanine. This chain is Aspartate 1-decarboxylase, found in Pseudarthrobacter chlorophenolicus (strain ATCC 700700 / DSM 12829 / CIP 107037 / JCM 12360 / KCTC 9906 / NCIMB 13794 / A6) (Arthrobacter chlorophenolicus).